An 881-amino-acid polypeptide reads, in one-letter code: DNA mismatch repair protein MutS (881 aa).

An ATP-binding site is contributed by 626–633; sequence GPNMAGKS.

It belongs to the DNA mismatch repair MutS family.

Functionally, this protein is involved in the repair of mismatches in DNA. It is possible that it carries out the mismatch recognition step. This protein has a weak ATPase activity. This chain is DNA mismatch repair protein MutS, found in Desulfosudis oleivorans (strain DSM 6200 / JCM 39069 / Hxd3) (Desulfococcus oleovorans).